The sequence spans 510 residues: NEDD8-activating enzyme E1 regulatory subunit (510 aa).

A2 is subject to N-acetylalanine. An N6-acetyllysine mark is found at K6 and K317. Residues 307 to 320 (DMIADSGKYIKLQN) form an interaction with UBA3 region.

This sequence belongs to the ubiquitin-activating E1 family. ULA1 subfamily. As to quaternary structure, heterodimer of UBA3 and NAE1. The complex binds NEDD8 and UBE2M. Binds APP and TP53BP2. Post-translationally, ubiquitinated by TRIP12, leading to its degradation by the proteasome.

The protein resides in the cell membrane. Its pathway is protein modification; protein neddylation. With respect to regulation, binding of TP53BP2 to the regulatory subunit NAE1 decreases neddylation activity. In terms of biological role, regulatory subunit of the dimeric UBA3-NAE1 E1 enzyme. E1 activates NEDD8 by first adenylating its C-terminal glycine residue with ATP, thereafter linking this residue to the side chain of the catalytic cysteine, yielding a NEDD8-UBA3 thioester and free AMP. E1 finally transfers NEDD8 to the catalytic cysteine of UBE2M. Necessary for cell cycle progression through the S-M checkpoint. Overexpression of NAE1 causes apoptosis through deregulation of NEDD8 conjugation. The covalent attachment of NEDD8 to target proteins is known as 'neddylation' and the process is involved in the regulation of cell growth, viability and development. In Macaca fascicularis (Crab-eating macaque), this protein is NEDD8-activating enzyme E1 regulatory subunit (NAE1).